The sequence spans 313 residues: Tagatose-6-phosphate kinase (313 aa).

Belongs to the carbohydrate kinase PfkB family. LacC subfamily.

The enzyme catalyses D-tagatofuranose 6-phosphate + ATP = D-tagatofuranose 1,6-bisphosphate + ADP + H(+). The protein operates within carbohydrate metabolism; D-tagatose 6-phosphate degradation; D-glyceraldehyde 3-phosphate and glycerone phosphate from D-tagatose 6-phosphate: step 1/2. The sequence is that of Tagatose-6-phosphate kinase from Enterococcus faecalis (strain ATCC 700802 / V583).